The chain runs to 260 residues: Potassium inward rectifier (Kir)-like channel 3 (260 aa).

Residues 1-34 are disordered; the sequence is MPMTPSEFKNRLLFGSLPRSSSDPTDLQFTEPNV. The Cytoplasmic segment spans residues 1-68; it reads MPMTPSEFKN…EQSVSKSIAR (68 aa). The span at 18–31 shows a compositional bias: polar residues; that stretch reads PRSSSDPTDLQFTE. A helical transmembrane segment spans residues 69-89; that stretch reads QALALLVVYLSLGVLIYWLTL. The segment at residues 127–146 is an intramembrane region (pore-forming); that stretch reads DSFCFSVMMVTTVGFGDRAF. Residues 153–173 form a helical membrane-spanning segment; the sequence is FLAAVWLLVSTLAVARAFLFL. The Cytoplasmic segment spans residues 174 to 260; it reads ADARADKRNR…LVDLTTATSV (87 aa). 2 consecutive EF-hand domains span residues 190 to 225 and 229 to 256; these read LGESISISQFFAADIDNDGRLSLAEFAIYKLKQMEK and EDFIQICNQFDKLDRTQSGRITLVDLTT. The Ca(2+) site is built by aspartate 203, aspartate 205, aspartate 207, arginine 209, glutamate 214, aspartate 242, serine 246, arginine 248, and aspartate 253.

This sequence belongs to the two pore domain potassium channel (TC 1.A.1.7) family. As to quaternary structure, homotetramer. Expressed in hydathodes and the vascular tissues of roots, stems, leaves and flowers.

Its subcellular location is the vacuole membrane. Probable calcium-activated potassium channel. In Arabidopsis thaliana (Mouse-ear cress), this protein is Potassium inward rectifier (Kir)-like channel 3 (KCO3).